Here is a 92-residue protein sequence, read N- to C-terminus: Small ribosomal subunit protein uS19c (92 aa).

It belongs to the universal ribosomal protein uS19 family.

It is found in the plastid. The protein resides in the chloroplast. Functionally, protein S19 forms a complex with S13 that binds strongly to the 16S ribosomal RNA. The protein is Small ribosomal subunit protein uS19c of Nicotiana tomentosiformis (Tobacco).